A 38-amino-acid chain; its full sequence is Large ribosomal subunit protein bL36 (38 aa).

This sequence belongs to the bacterial ribosomal protein bL36 family.

In Ralstonia nicotianae (strain ATCC BAA-1114 / GMI1000) (Ralstonia solanacearum), this protein is Large ribosomal subunit protein bL36.